A 320-amino-acid polypeptide reads, in one-letter code: Myoblast determination protein 1 (320 aa).

A Peptide (Met-Gly) (interchain with G-Cter in ubiquitin) cross-link involves residue Met-1. Lys-104 bears the N6-methyllysine; by EHMT2 mark. The 52-residue stretch at 109 to 160 folds into the bHLH domain; that stretch reads DRRKAATMRERRRLSKVNEAFETLKRCTSSNPNQRLPKVEILRNAIRYIEGL. Disordered stretches follow at residues 174-219 and 262-320; these read AAAA…PPSG and ESPA…YQVL. 2 stretches are compositionally biased toward polar residues: residues 197-207 and 291-301; these read SDASSPRSNCS and GESSGDPTQSP.

In terms of assembly, efficient DNA binding requires dimerization with another bHLH protein. Seems to form active heterodimers with ITF-2. Interacts with SUV39H1. Interacts with DDX5. Interacts with CHD2. Interacts with TSC22D3. Interacts with SETD3. Interacts with P-TEFB complex; promotes the transcriptional activity of MYOD1 through its CDK9-mediated phosphorylation. Interacts with CSRP3. Interacts with NUPR1. Post-translationally, phosphorylated by CDK9. This phosphorylation promotes its function in muscle differentiation. In terms of processing, acetylated by a complex containing EP300 and PCAF. The acetylation is essential to activate target genes. Conversely, its deacetylation by SIRT1 inhibits its function. Ubiquitinated on the N-terminus; which is required for proteasomal degradation. Post-translationally, methylation at Lys-104 by EHMT2/G9a inhibits myogenic activity.

It localises to the nucleus. In terms of biological role, acts as a transcriptional activator that promotes transcription of muscle-specific target genes and plays a role in muscle differentiation. Together with MYF5 and MYOG, co-occupies muscle-specific gene promoter core region during myogenesis. Induces fibroblasts to differentiate into myoblasts. Interacts with and is inhibited by the twist protein. This interaction probably involves the basic domains of both proteins. The sequence is that of Myoblast determination protein 1 (MYOD1) from Homo sapiens (Human).